A 408-amino-acid polypeptide reads, in one-letter code: UDP-N-acetylglucosamine--dolichyl-phosphate N-acetylglucosaminephosphotransferase (408 aa).

The Lumenal segment spans residues 1 to 10 (MWAFPELPMP). Residues 11–38 (LLVNLIGSLMGFVATVTLIPAFRGHFIA) form a helical membrane-spanning segment. Residues 39-58 (ARLCGQDLNKSSREQIPESQ) lie on the Cytoplasmic side of the membrane. Residues 44 to 46 (QDL) and Glu56 each bind UDP-N-acetyl-alpha-D-glucosamine. A helical membrane pass occupies residues 59–78 (GVISGAVFLIILFCFIPFPF). Topologically, residues 79-91 (LNCFVEQQCKAFP) are lumenal. Residues 92-118 (HHEFVALIGALLAICCMIFLGFADDVL) form a helical membrane-spanning segment. The Cytoplasmic portion of the chain corresponds to 119 to 121 (NLR). Residues 122 to 143 (WRHKLLLPTAASLPLLMVYFTN) form a helical membrane-spanning segment. Residue Lys125 participates in dolichyl phosphate binding. At 144-166 (FGNTTIVVPKPLRPILGLHLDLG) the chain is on the lumenal side. Asn146 carries an N-linked (GlcNAc...) asparagine glycan. Residues 167–186 (ILYYVYMGLLAVFCTNAINI) form a helical membrane-spanning segment. 178 to 186 (VFCTNAINI) lines the dolichyl phosphate pocket. Asn185 lines the Mg(2+) pocket. The Cytoplasmic segment spans residues 187–192 (LAGING). Residue Asn191 participates in UDP-N-acetyl-alpha-D-glucosamine binding. A helical membrane pass occupies residues 193 to 213 (LEAGQSLVISASIIVFNLVEL). Topologically, residues 214–218 (DGDYR) are lumenal. The helical transmembrane segment at 219 to 242 (DDHIFSLYFMIPFFFTTLGLLYHN) threads the bilayer. Over 243 to 250 (WYPSRVFV) the chain is Cytoplasmic. A helical transmembrane segment spans residues 251-269 (GDTFCYFAGMTFAVVGILG). Asp252 contributes to the Mg(2+) binding site. Residues 270 to 271 (HF) lie on the Lumenal side of the membrane. A helical transmembrane segment spans residues 272–293 (SKTMLLFFMPQVFNFLYSLPQL). Over 294–375 (LHIIPCPRHR…LLLKVFGPMH (82 aa)) the chain is Cytoplasmic. 301-303 (RHR) is a binding site for UDP-N-acetyl-alpha-D-glucosamine. A helical transmembrane segment spans residues 376 to 400 (ERNLTLLLLLLQVVGSAVTFSIRYQ). Residues 401–408 (LVRLFYDV) lie on the Lumenal side of the membrane.

It belongs to the glycosyltransferase 4 family. Homodimer. Mg(2+) serves as cofactor.

Its subcellular location is the endoplasmic reticulum membrane. The enzyme catalyses a di-trans,poly-cis-dolichyl phosphate + UDP-N-acetyl-alpha-D-glucosamine = an N-acetyl-alpha-D-glucosaminyl-diphospho-di-trans,poly-cis-dolichol + UMP. It functions in the pathway protein modification; protein glycosylation. Its activity is regulated as follows. Inhibited by natural nucleoside antibiotic tunicamycin, which acts as a structural analog and competitor of UDP-GlcNAc. Activated by Man-P-Dol. Activated by manganese. Inhibited by diumycin. Its function is as follows. UDP-N-acetylglucosamine--dolichyl-phosphate N-acetylglucosaminephosphotransferase that operates in the biosynthetic pathway of dolichol-linked oligosaccharides, the glycan precursors employed in protein asparagine (N)-glycosylation. The assembly of dolichol-linked oligosaccharides begins on the cytosolic side of the endoplasmic reticulum membrane and finishes in its lumen. The sequential addition of sugars to dolichol pyrophosphate produces dolichol-linked oligosaccharides containing fourteen sugars, including two GlcNAcs, nine mannoses and three glucoses. Once assembled, the oligosaccharide is transferred from the lipid to nascent proteins by oligosaccharyltransferases. Catalyzes the initial step of dolichol-linked oligosaccharide biosynthesis, transfering GlcNAc-1-P from cytosolic UDP-GlcNAc onto the carrier lipid dolichyl phosphate (P-dolichol), yielding GlcNAc-P-P-dolichol embedded in the cytoplasmic leaflet of the endoplasmic reticulum membrane. The polypeptide is UDP-N-acetylglucosamine--dolichyl-phosphate N-acetylglucosaminephosphotransferase (Bos taurus (Bovine)).